A 213-amino-acid chain; its full sequence is Thymidylate kinase (213 aa).

9–16 (GIEGCGKT) is an ATP binding site.

The protein belongs to the thymidylate kinase family.

It carries out the reaction dTMP + ATP = dTDP + ADP. In terms of biological role, phosphorylation of dTMP to form dTDP in both de novo and salvage pathways of dTTP synthesis. The sequence is that of Thymidylate kinase from Geobacter sulfurreducens (strain ATCC 51573 / DSM 12127 / PCA).